We begin with the raw amino-acid sequence, 261 residues long: Enolase-phosphatase E1 (261 aa).

Residues Asp-16 and Glu-18 each coordinate Mg(2+). Substrate contacts are provided by residues 153–154 (SS) and Lys-187. Residue Asp-212 participates in Mg(2+) binding.

This sequence belongs to the HAD-like hydrolase superfamily. MasA/MtnC family. In terms of assembly, monomer. It depends on Mg(2+) as a cofactor.

The protein resides in the cytoplasm. Its subcellular location is the nucleus. It carries out the reaction 5-methylsulfanyl-2,3-dioxopentyl phosphate + H2O = 1,2-dihydroxy-5-(methylsulfanyl)pent-1-en-3-one + phosphate. It participates in amino-acid biosynthesis; L-methionine biosynthesis via salvage pathway; L-methionine from S-methyl-5-thio-alpha-D-ribose 1-phosphate: step 3/6. Its pathway is amino-acid biosynthesis; L-methionine biosynthesis via salvage pathway; L-methionine from S-methyl-5-thio-alpha-D-ribose 1-phosphate: step 4/6. Bifunctional enzyme that catalyzes the enolization of 2,3-diketo-5-methylthiopentyl-1-phosphate (DK-MTP-1-P) into the intermediate 2-hydroxy-3-keto-5-methylthiopentenyl-1-phosphate (HK-MTPenyl-1-P), which is then dephosphorylated to form the acireductone 1,2-dihydroxy-3-keto-5-methylthiopentene (DHK-MTPene). This is Enolase-phosphatase E1 (enoph1) from Salmo salar (Atlantic salmon).